We begin with the raw amino-acid sequence, 315 residues long: Protease HtpX homolog (315 aa).

Residues 16–36 traverse the membrane as a helical segment; the sequence is LFMGIGYLIGGASGALIALVV. Zn(2+) is bound at residue H130. Residue E131 is part of the active site. Residue H134 participates in Zn(2+) binding. 2 helical membrane passes run 145 to 165 and 172 to 192; these read ITAT…FFGG and GPGL…AMLV. Position 201 (E201) interacts with Zn(2+). The disordered stretch occupies residues 282-315; it reads GGGGASIGRPAGPSPRGAPRSPWSGQPRARGPWG. The span at 288-303 shows a compositional bias: low complexity; the sequence is IGRPAGPSPRGAPRSP.

The protein belongs to the peptidase M48B family. The cofactor is Zn(2+).

It is found in the cell inner membrane. The sequence is that of Protease HtpX homolog from Rhodopseudomonas palustris (strain BisB5).